A 695-amino-acid chain; its full sequence is Exocyst complex component EXO70C2 (695 aa).

Over residues 1 to 36 the composition is skewed to basic and acidic residues; the sequence is MEKNDKDPDHDDKSKGDEKGDVVSDAHPSDDAHHQD. 2 disordered regions span residues 1-71 and 210-229; these read MEKN…EEAP and VVTD…QDHQ. Thr-212 is modified (phosphothreonine). 2 positions are modified to phosphoserine: Ser-215 and Ser-217. Position 446 is a phosphothreonine (Thr-446). A phosphoserine mark is found at Ser-494 and Ser-605.

This sequence belongs to the EXO70 family. As to quaternary structure, interacts with ROH1A and ROH1D independently of its phosphorylation status. In terms of processing, phosphorylation on Ser and Thr residues promotes its ability to repress pollen tube growth and to regulate cellular architecture at the pollen tube tip. In terms of tissue distribution, expressed in anthers, pollen and root trichoblast cells. Also observed in anther tapetum.

It is found in the cytoplasm. Functionally, required for optimal tip growth of pollen tube; dose-dependent negative regulator of exocyst function in pollen tube growth and cellular architecture at the pollen tube tip, probably by modulating membrane trafficking and exocytosis dynamics. The protein is Exocyst complex component EXO70C2 of Arabidopsis thaliana (Mouse-ear cress).